Reading from the N-terminus, the 86-residue chain is Neurotoxin LmNaTx35.2 (86 aa).

Residues 1-21 (MQLKIQLLMLVLMTVLTGVLG) form the signal peptide. The LCN-type CS-alpha/beta domain occupies 22–85 (KDGYVVHEDT…VYGDKGTYCW (64 aa)). 4 cysteine pairs are disulfide-bonded: cysteine 33/cysteine 84, cysteine 37/cysteine 60, cysteine 46/cysteine 65, and cysteine 50/cysteine 67.

It belongs to the long (4 C-C) scorpion toxin superfamily. Sodium channel inhibitor family. Alpha subfamily. As to expression, expressed by the venom gland.

The protein resides in the secreted. Its function is as follows. Binds voltage-independently at site-3 of voltage-gated sodium channels (Nav) and inhibits the inactivation of the activated channels, thereby blocking neuronal transmission. This Lychas mucronatus (Chinese swimming scorpion) protein is Neurotoxin LmNaTx35.2.